A 197-amino-acid chain; its full sequence is dITP/XTP pyrophosphatase (197 aa).

9-14 (SNNAGK) lines the substrate pocket. D70 acts as the Proton acceptor in catalysis. D70 is a Mg(2+) binding site. Residues S71, 153–156 (FGYD), K176, and 181–182 (HR) contribute to the substrate site.

This sequence belongs to the HAM1 NTPase family. In terms of assembly, homodimer. Requires Mg(2+) as cofactor.

The catalysed reaction is XTP + H2O = XMP + diphosphate + H(+). It catalyses the reaction dITP + H2O = dIMP + diphosphate + H(+). It carries out the reaction ITP + H2O = IMP + diphosphate + H(+). Its function is as follows. Pyrophosphatase that catalyzes the hydrolysis of nucleoside triphosphates to their monophosphate derivatives, with a high preference for the non-canonical purine nucleotides XTP (xanthosine triphosphate), dITP (deoxyinosine triphosphate) and ITP. Seems to function as a house-cleaning enzyme that removes non-canonical purine nucleotides from the nucleotide pool, thus preventing their incorporation into DNA/RNA and avoiding chromosomal lesions. The chain is dITP/XTP pyrophosphatase from Chromobacterium violaceum (strain ATCC 12472 / DSM 30191 / JCM 1249 / CCUG 213 / NBRC 12614 / NCIMB 9131 / NCTC 9757 / MK).